The following is a 408-amino-acid chain: Multidrug resistance protein MdtG (408 aa).

The next 11 helical transmembrane spans lie at 16-36 (LIVA…VMPF), 58-78 (IVFS…GGLA), 92-112 (LGMG…QFLI), 115-135 (ALLG…ATQV), 146-166 (TLST…GLLA), 173-193 (PVFF…LFCI), 224-244 (LFVT…ILTL), 256-276 (VAFI…LSAP), 290-310 (ILIT…YVQT), 319-339 (FLLG…LVYN), and 378-398 (AVFL…WNSL).

It belongs to the major facilitator superfamily. DHA1 family. MdtG (TC 2.A.1.2.20) subfamily.

It localises to the cell inner membrane. Confers resistance to fosfomycin and deoxycholate. The chain is Multidrug resistance protein MdtG from Escherichia coli O7:K1 (strain IAI39 / ExPEC).